Here is a 166-residue protein sequence, read N- to C-terminus: Endoribonuclease YbeY (166 aa).

Positions 111, 115, and 121 each coordinate Zn(2+). Residues 141 to 166 (LGYPDPYAEDESADHPHSDTPSKDHE) form a disordered region. Basic and acidic residues predominate over residues 153-166 (ADHPHSDTPSKDHE).

The protein belongs to the endoribonuclease YbeY family. Zn(2+) is required as a cofactor.

The protein localises to the cytoplasm. Functionally, single strand-specific metallo-endoribonuclease involved in late-stage 70S ribosome quality control and in maturation of the 3' terminus of the 16S rRNA. The sequence is that of Endoribonuclease YbeY from Pseudomonas savastanoi pv. phaseolicola (strain 1448A / Race 6) (Pseudomonas syringae pv. phaseolicola (strain 1448A / Race 6)).